Here is a 355-residue protein sequence, read N- to C-terminus: UDP-N-acetylglucosamine--N-acetylmuramyl-(pentapeptide) pyrophosphoryl-undecaprenol N-acetylglucosamine transferase (355 aa).

UDP-N-acetyl-alpha-D-glucosamine-binding positions include 14–16 (TGG), Asn126, Arg162, Ser190, Ile244, and Gln289.

This sequence belongs to the glycosyltransferase 28 family. MurG subfamily.

The protein resides in the cell inner membrane. The catalysed reaction is di-trans,octa-cis-undecaprenyl diphospho-N-acetyl-alpha-D-muramoyl-L-alanyl-D-glutamyl-meso-2,6-diaminopimeloyl-D-alanyl-D-alanine + UDP-N-acetyl-alpha-D-glucosamine = di-trans,octa-cis-undecaprenyl diphospho-[N-acetyl-alpha-D-glucosaminyl-(1-&gt;4)]-N-acetyl-alpha-D-muramoyl-L-alanyl-D-glutamyl-meso-2,6-diaminopimeloyl-D-alanyl-D-alanine + UDP + H(+). The protein operates within cell wall biogenesis; peptidoglycan biosynthesis. In terms of biological role, cell wall formation. Catalyzes the transfer of a GlcNAc subunit on undecaprenyl-pyrophosphoryl-MurNAc-pentapeptide (lipid intermediate I) to form undecaprenyl-pyrophosphoryl-MurNAc-(pentapeptide)GlcNAc (lipid intermediate II). This is UDP-N-acetylglucosamine--N-acetylmuramyl-(pentapeptide) pyrophosphoryl-undecaprenol N-acetylglucosamine transferase from Paracidovorax citrulli (strain AAC00-1) (Acidovorax citrulli).